The sequence spans 110 residues: Large ribosomal subunit protein uL22 (110 aa).

Belongs to the universal ribosomal protein uL22 family. As to quaternary structure, part of the 50S ribosomal subunit.

Its function is as follows. This protein binds specifically to 23S rRNA; its binding is stimulated by other ribosomal proteins, e.g. L4, L17, and L20. It is important during the early stages of 50S assembly. It makes multiple contacts with different domains of the 23S rRNA in the assembled 50S subunit and ribosome. In terms of biological role, the globular domain of the protein is located near the polypeptide exit tunnel on the outside of the subunit, while an extended beta-hairpin is found that lines the wall of the exit tunnel in the center of the 70S ribosome. The chain is Large ribosomal subunit protein uL22 from Hahella chejuensis (strain KCTC 2396).